We begin with the raw amino-acid sequence, 91 residues long: Small ubiquitin-related modifier (91 aa).

The Ubiquitin-like domain maps to 13–91 (EYIKIKVVGQ…EVYQEQLGGF (79 aa)). A Glycyl lysine isopeptide (Gly-Lys) (interchain with K-? in acceptor proteins) cross-link involves residue Gly90. Residue Phe91 is a propeptide.

It belongs to the ubiquitin family. SUMO subfamily. Covalently attached to tbx-2. Covalently attached to lin-1. Covalently attached to lin-11. Covalently attached to sop-2. Covalently attached to bet-1. Cleavage of precursor form by ulp-1 is necessary for function.

It localises to the cytoplasm. It is found in the nucleus. Its subcellular location is the cytoskeleton. The protein resides in the spindle. The protein localises to the chromosome. It localises to the microtubule organizing center. It is found in the centrosome. Ubiquitin-like protein which can be covalently attached to target lysines as a monomer. Does not seem to be involved in protein degradation and may function as an antagonist of ubiquitin in the degradation process. Plays a role in a number of cellular processes such as nuclear transport, DNA replication and repair, mitosis and signal transduction. Covalent attachment to its substrates requires prior activation by the E1 complex aos-1-uba-2 and linkage to the E2 enzyme ubc-9, and can be promoted by an E3 ligase such as gei-17. Required for embryonic development, fertility, vulval morphogenesis and inhibition of vulval cell fates. Probably by sumoylating bet-1, prevents muscle myosin depletion in aging adults probably by preventing myoblast growth factor receptor egl-15 overexpression. Plays a role in the attenuation of the let-60/ras pathway. Plays a role in male tail tip morphogenesis. Plays a role in the mitochondrial stress response with its covalent attachment to transcription factors dve-1 and afts-1 negatively regulating the mitochondrial unfolded protein response. The chain is Small ubiquitin-related modifier from Caenorhabditis elegans.